Here is a 302-residue protein sequence, read N- to C-terminus: tRNA dimethylallyltransferase 1 (302 aa).

6–13 (GPTACGKT) contacts ATP. Substrate is bound at residue 8-13 (TACGKT). Interaction with substrate tRNA stretches follow at residues 31–34 (DSRQ) and 154–158 (QRAIR).

This sequence belongs to the IPP transferase family. In terms of assembly, monomer. Mg(2+) is required as a cofactor.

The enzyme catalyses adenosine(37) in tRNA + dimethylallyl diphosphate = N(6)-dimethylallyladenosine(37) in tRNA + diphosphate. Catalyzes the transfer of a dimethylallyl group onto the adenine at position 37 in tRNAs that read codons beginning with uridine, leading to the formation of N6-(dimethylallyl)adenosine (i(6)A). This is tRNA dimethylallyltransferase 1 from Porphyromonas gingivalis (strain ATCC 33277 / DSM 20709 / CIP 103683 / JCM 12257 / NCTC 11834 / 2561).